The primary structure comprises 762 residues: Pyrophosphate-energized vacuolar membrane proton pump (762 aa).

The Intravacuolar segment spans residues 1–6; it reads MAILGE. Residues 7-33 form a helical membrane-spanning segment; sequence LGTEILIPVCGVIGIVFAVAQWFIVSK. Topologically, residues 34–81 are cytoplasmic; it reads VKVTPGAASAAAGAKNGYGDYLIEEEEGLNDHNVVVKCAEIQTAISEG. A helical transmembrane segment spans residues 82 to 111; sequence ATSFLFTMYQYVGMFMVVFAAIIFLFLGSI. Residues 112–131 lie on the Intravacuolar side of the membrane; the sequence is EGFSTKGQPCTYSKGTCKPA. The cysteines at positions 121 and 128 are disulfide-linked. Residues 132 to 159 form a helical membrane-spanning segment; it reads LYTALFSTASFLLGAITSLVSGFLGMKI. Over 160-182 the chain is Cytoplasmic; sequence ATYANARTTLEARKGVGKAFITA. A helical membrane pass occupies residues 183–212; it reads FRSGAVMGFLLSSSGLVVLYITINVFKMYY. The Intravacuolar segment spans residues 213–215; that stretch reads GDD. Residues 216–244 traverse the membrane as a helical segment; it reads WEGLFESITGYGLGGSSMALFGRVGGGIY. Residues 245–282 lie on the Cytoplasmic side of the membrane; it reads TKAADVGADLVGKVERNIPEDDPRNPAVIADNVGDNVG. Substrate is bound at residue K246. 3 residues coordinate Mg(2+): D249, D253, and D279. The helical transmembrane segment at 283-308 threads the bilayer; sequence DIAGMGSDLFGSYAESSCAALVVASI. At 309 to 316 the chain is on the intravacuolar side; sequence SSFGINHD. A helical transmembrane segment spans residues 317–342; that stretch reads FTAMCYPLLVSSVGIIVCLLTTLFAT. Over 343–350 the chain is Cytoplasmic; that stretch reads DFFEIKAA. A helical transmembrane segment spans residues 351 to 378; it reads NEIEPALKKQLIISTALMTVGVAVISWL. Residues 379–397 lie on the Intravacuolar side of the membrane; that stretch reads ALPAKFTIFNFGAQKEVSN. A helical transmembrane segment spans residues 398–421; the sequence is WGLFFCVAVGLWAGLIIGFVTEYY. Residues 422-443 lie on the Cytoplasmic side of the membrane; sequence TSNAYSPVQDVADSCRTGAATN. The chain crosses the membrane as a helical span at residues 444 to 468; that stretch reads VIFGLALGYKSVIIPIFAIAVSIYV. At 469-474 the chain is on the intravacuolar side; the sequence is SFSIAA. The helical transmembrane segment at 475 to 501 threads the bilayer; it reads MYGIAMAALGMLSTMATGLAIDAYGPI. The Cytoplasmic portion of the chain corresponds to 502–530; it reads SDNAGGIAEMAGMSHRIRERTDALDAAGN. The Mg(2+) site is built by D503 and N530. A helical membrane pass occupies residues 531–559; sequence TTAAIGKGFAIGSAALVSLALFGAFVSRA. The Intravacuolar portion of the chain corresponds to 560–569; sequence GVKVVDVLSP. Residues 570 to 598 traverse the membrane as a helical segment; it reads KVFIGLIVGAMLPYWFSAMTMKSVGSAAL. The Cytoplasmic segment spans residues 599-627; it reads KMVEEVRRQFNTIPGLMEGTAKPDYATCV. A helical transmembrane segment spans residues 628-656; the sequence is KISTDASIKEMIPPGALVMLTPLIVGTLF. G657 is a topological domain (intravacuolar). The helical transmembrane segment at 658–685 threads the bilayer; the sequence is VETLSGVLAGALVSGVQIAISASNTGGA. Residues 686–728 are Cytoplasmic-facing; it reads WDNAKKYIEAGNSEHARSLGPKGSDCHKAAVIGDTIGDPLKDT. Positions 687 and 723 each coordinate Mg(2+). Position 726 (K726) interacts with substrate. The chain crosses the membrane as a helical span at residues 729–754; that stretch reads SGPSLNILIKLMAVESLVFAPFFATY. Residues 755–762 are Intravacuolar-facing; that stretch reads GGLLFKYI.

It belongs to the H(+)-translocating pyrophosphatase (TC 3.A.10) family. K(+)-stimulated subfamily. As to quaternary structure, monomer.

It is found in the vacuole membrane. It carries out the reaction diphosphate + H2O + H(+)(in) = 2 phosphate + 2 H(+)(out). Its function is as follows. Contributes to the transtonoplast (from cytosol to vacuole lumen) H(+)-electrochemical potential difference. It establishes a proton gradient of similar and often greater magnitude than the H(+)-ATPase on the same membrane. In Hordeum vulgare (Barley), this protein is Pyrophosphate-energized vacuolar membrane proton pump.